A 173-amino-acid chain; its full sequence is Ferritin, lower subunit (173 aa).

One can recognise a Ferritin-like diiron domain in the interval 7–156 (QNFHQDCEAG…DHITSLKKLW (150 aa)). Fe cation contacts are provided by Glu59 and His62.

It belongs to the ferritin family. As to quaternary structure, oligomer of 24 subunits. The functional molecule is roughly spherical and contains a central cavity into which the polymeric mineral iron core is deposited.

Its function is as follows. Stores iron in a soluble, non-toxic, readily available form. Important for iron homeostasis. Iron is taken up in the ferrous form and deposited as ferric hydroxides after oxidation. This is Ferritin, lower subunit from Aquarana catesbeiana (American bullfrog).